The sequence spans 439 residues: Cell division protein FtsA (439 aa).

The protein belongs to the FtsA/MreB family. As to quaternary structure, self-interacts. Interacts with FtsZ.

The protein localises to the cell inner membrane. Cell division protein that is involved in the assembly of the Z ring. May serve as a membrane anchor for the Z ring. The chain is Cell division protein FtsA from Shigella flexneri.